The following is a 478-amino-acid chain: Cytochrome c-552 (478 aa).

Residues 1–26 (MTRIKINARRIFSLLIPFFFFTSVHA) form the signal peptide. His94 provides a ligand contact to heme c. Heme contacts are provided by Cys122, Cys125, and Lys126. Cys160, Cys163, His164, Cys209, Cys212, and His213 together coordinate heme c. Residues Glu215, Tyr216, Lys261, and Gln263 each coordinate Ca(2+). Tyr216 provides a ligand contact to substrate. Substrate is bound at residue His264. Residues His275, Cys282, Cys285, His286, His301, Cys314, Cys317, His318, and His393 each contribute to the heme c site.

It belongs to the cytochrome c-552 family. It depends on Ca(2+) as a cofactor. Requires heme c as cofactor.

It localises to the periplasm. The catalysed reaction is 6 Fe(III)-[cytochrome c] + NH4(+) + 2 H2O = 6 Fe(II)-[cytochrome c] + nitrite + 8 H(+). It functions in the pathway nitrogen metabolism; nitrate reduction (assimilation). Catalyzes the reduction of nitrite to ammonia, consuming six electrons in the process. The chain is Cytochrome c-552 from Shigella flexneri.